The chain runs to 249 residues: Probable phosphoglycerate mutase (249 aa).

Substrate-binding positions include 9–16 (RHGESTWN), 22–23 (TG), Arg61, 88–91 (ERMY), Lys99, 115–116 (RR), and 184–185 (GN). The active-site Tele-phosphohistidine intermediate is the His10. Glu88 (proton donor/acceptor) is an active-site residue.

It belongs to the phosphoglycerate mutase family. BPG-dependent PGAM subfamily. In terms of assembly, homodimer.

It catalyses the reaction (2R)-2-phosphoglycerate = (2R)-3-phosphoglycerate. The enzyme catalyses (2R)-3-phospho-glyceroyl phosphate = (2R)-2,3-bisphosphoglycerate + H(+). Functionally, catalyzes the interconversion of 2-phosphoglycerate and 3-phosphoglycerate. The chain is Probable phosphoglycerate mutase (gpmA) from Dictyostelium discoideum (Social amoeba).